Here is a 303-residue protein sequence, read N- to C-terminus: MKVIFMGTPEFAVPTLKKLIIHHEVKAVFTQQPKAKGRGLHLAKSPIHQLAFEHQIPVYSPSTLRNDETINLIKKIDADIIVVIAYGFIVPKAILEAKKYGCLNIHPSDLPRHRGAAPLQRTIIEGDRKSSVCIMRMDSGLDTGDILLKEDLNLERRITLDELSNKCAHLGAELLIKTLANIDNIVPIKQSSNGITYAHKLTKAEGKINWYESAYSIDCKIRGMNPWPGAYFSYNDKIIKILRAEYFNYNHHFIPGTVINNKLEIACGSGILRVKKLQQESKKALNIEEFLRGTNILKDTILK.

(6S)-5,6,7,8-tetrahydrofolate is bound at residue 108-111; the sequence is SDLP.

The protein belongs to the Fmt family.

It carries out the reaction L-methionyl-tRNA(fMet) + (6R)-10-formyltetrahydrofolate = N-formyl-L-methionyl-tRNA(fMet) + (6S)-5,6,7,8-tetrahydrofolate + H(+). Attaches a formyl group to the free amino group of methionyl-tRNA(fMet). The formyl group appears to play a dual role in the initiator identity of N-formylmethionyl-tRNA by promoting its recognition by IF2 and preventing the misappropriation of this tRNA by the elongation apparatus. The sequence is that of Methionyl-tRNA formyltransferase from Rickettsia prowazekii (strain Madrid E).